Here is a 794-residue protein sequence, read N- to C-terminus: Ribonucleoside-diphosphate reductase large subunit (794 aa).

Positions 1 to 92 (MHVIKRDGGQ…VSNLHKETKK (92 aa)) constitute an ATP-cone domain. Residues 5–6 (KR), 11–17 (EGVMFDK), Thr53, and Asp57 contribute to the ATP site. Ser202 and Ser217 together coordinate GDP. Cys218 and Cys444 are oxidised to a cystine. Residues 226–228 (DSI), Lys243, Arg256, and 263–264 (AG) each bind dTTP. Asn427 lines the GDP pocket. Asn427 functions as the Proton acceptor in the catalytic mechanism. Cys429 serves as the catalytic Cysteine radical intermediate. Residues Glu431 and 604–607 (TAST) each bind GDP. The active-site Proton acceptor is Glu431.

The protein belongs to the ribonucleoside diphosphate reductase large chain family. Heterodimer of a large and a small subunit.

The protein localises to the cytoplasm. It carries out the reaction a 2'-deoxyribonucleoside 5'-diphosphate + [thioredoxin]-disulfide + H2O = a ribonucleoside 5'-diphosphate + [thioredoxin]-dithiol. Under complex allosteric control mediated by deoxynucleoside triphosphates and ATP binding to separate specificity and activation sites on the M1 subunit. The type of nucleotide bound at the specificity site determines substrate preference. It seems probable that ATP makes the enzyme reduce CDP and UDP, dGTP favors ADP reduction and dTTP favors GDP reduction. Stimulated by ATP and inhibited by dATP binding to the activity site. In terms of biological role, provides the precursors necessary for DNA synthesis. Catalyzes the biosynthesis of deoxyribonucleotides from the corresponding ribonucleotides. The protein is Ribonucleoside-diphosphate reductase large subunit (rrm1) of Danio rerio (Zebrafish).